Here is a 270-residue protein sequence, read N- to C-terminus: Regulatory protein RecX (270 aa).

It belongs to the RecX family.

The protein localises to the cytoplasm. Modulates RecA activity. This Bacillus cytotoxicus (strain DSM 22905 / CIP 110041 / 391-98 / NVH 391-98) protein is Regulatory protein RecX.